Here is a 333-residue protein sequence, read N- to C-terminus: Low specificity L-threonine aldolase (333 aa).

Lys197 is subject to N6-(pyridoxal phosphate)lysine.

It belongs to the threonine aldolase family. Homotetramer. It depends on pyridoxal 5'-phosphate as a cofactor.

The enzyme catalyses L-threonine = acetaldehyde + glycine. The catalysed reaction is L-allo-threonine = acetaldehyde + glycine. Catalyzes the cleavage of L-allo-threonine and L-threonine to glycine and acetaldehyde. L-threo-phenylserine and L-erythro-phenylserine are also good substrates. This is Low specificity L-threonine aldolase (ltaE) from Escherichia coli O157:H7.